We begin with the raw amino-acid sequence, 483 residues long: Galactose-3-O-sulfotransferase 4 (483 aa).

At 1 to 18 (MGVLSPTRTMRLWGPRSL) the chain is on the cytoplasmic side. A helical; Signal-anchor for type II membrane protein transmembrane segment spans residues 19–39 (GVALGVFMTIGFALQLLGGPF). The Lumenal portion of the chain corresponds to 40 to 483 (QRRLPGLQLR…PLKTSRRPSP (444 aa)). The segment at 225–248 (KRGNPHVSRDPNPPQLPSGAGPPA) is disordered. N-linked (GlcNAc...) asparagine glycosylation is present at Asn-371.

This sequence belongs to the galactose-3-O-sulfotransferase family. The cofactor is Mn(2+).

The protein localises to the golgi apparatus. The protein resides in the golgi stack membrane. It functions in the pathway protein modification; carbohydrate sulfation. Its function is as follows. Catalyzes the transfer of sulfate to beta-1,3-linked galactose residues in O-linked glycoproteins. Good substrates include asialofetuin, Gal-beta-1,3-GalNAc and Gal-beta-1,3 (GlcNAc-beta-1,6)GalNAc. The polypeptide is Galactose-3-O-sulfotransferase 4 (GAL3ST4) (Bos taurus (Bovine)).